The sequence spans 243 residues: Probable fructoselysine utilization operon transcriptional repressor (243 aa).

An HTH gntR-type domain is found at 10-78 (QLLYATVRQR…QGKGTFVQSQ (69 aa)). Residues 38–57 (ENELCTQYNVSRITIRKAIS) constitute a DNA-binding region (H-T-H motif).

It participates in carbohydrate metabolism; fructoselysine degradation [regulation]. Functionally, may regulate the transcription of the frlABCDR operon, involved in the utilization of fructoselysine and psicoselysine. The sequence is that of Probable fructoselysine utilization operon transcriptional repressor from Escherichia coli (strain K12).